The primary structure comprises 1198 residues: Spindle-defective protein 5 (1198 aa).

Residues 1–10 (MEDNSVLNED) show a composition bias toward polar residues. The tract at residues 1-45 (MEDNSVLNEDSNLEHVEGQPRRSMSQPVLNVEGDKRTSSTSATQQ) is disordered. Coiled coils occupy residues 67–381 (EENK…QLTG), 566–603 (HDVA…FEEI), 694–916 (KFTS…LSTS), 983–1035 (DELC…ENVP), and 1127–1175 (KNET…EFQD).

It localises to the cytoplasm. Its subcellular location is the cytoskeleton. The protein localises to the microtubule organizing center. The protein resides in the centrosome. In terms of biological role, plays a central role in centrosome maturation and mitotic spindle assembly during the first division of the zygote. Required for the centrosomal localization of air-1 and zyg-9. Probably not required in late embryogenesis and during larval development. This chain is Spindle-defective protein 5 (spd-5), found in Caenorhabditis elegans.